The primary structure comprises 1138 residues: Tyrosine-protein kinase receptor Tie-1 (1138 aa).

The signal sequence occupies residues 1–21 (MVWRVPPFLLPILFLASHVGA). The Extracellular portion of the chain corresponds to 22 to 759 (AVDLTLLANL…SRAAEEGLDQ (738 aa)). The Ig-like C2-type 1 domain occupies 43–105 (CVSGEAGAGR…PSDLVGVFSC (63 aa)). 2 N-linked (GlcNAc...) asparagine glycosylation sites follow: asparagine 83 and asparagine 161. EGF-like domains follow at residues 214-256 (GCGA…TRCE), 258-303 (ACRE…SQCQ), and 305-345 (ACAP…VHCE). Intrachain disulfides connect cysteine 228–cysteine 237, cysteine 231–cysteine 244, and cysteine 246–cysteine 255. 3 disulfides stabilise this stretch: cysteine 315–cysteine 327, cysteine 321–cysteine 333, and cysteine 335–cysteine 344. An Ig-like C2-type 2 domain is found at 372–426 (CAAAGNPFPVRGSIELRKPDGTVLLSTKAIVEPEKTTAEFEVPRLVLADSGFWEC). Fibronectin type-III domains follow at residues 446–545 (PPVP…CPEP), 548–642 (QPWL…LPPS), and 646–739 (APRH…TLGN). Asparagine 503, asparagine 596, and asparagine 709 each carry an N-linked (GlcNAc...) asparagine glycan. A helical membrane pass occupies residues 760-784 (QLILAVVGSVSATCLTILAALLTLV). At 785-1138 (CIRRSCLHRR…AGIDATAEEA (354 aa)) the chain is on the cytoplasmic side. The 280-residue stretch at 839 to 1118 (ITFEDLIGEG…RMLEARKAYV (280 aa)) folds into the Protein kinase domain. Residues 845-853 (IGEGNFGQV) and lysine 870 each bind ATP. Catalysis depends on aspartate 979, which acts as the Proton acceptor. A Phosphotyrosine; by autocatalysis modification is found at tyrosine 1007.

This sequence belongs to the protein kinase superfamily. Tyr protein kinase family. Tie subfamily. As to quaternary structure, heterodimer with TEK/TIE2. Interacts with SVEP1 (via C-terminus). In terms of processing, phosphorylated on tyrosine residues in response to ANGPT1, most likely by TEK/TIE2. Specifically expressed in developing vascular endothelial cells.

It is found in the cell membrane. The catalysed reaction is L-tyrosyl-[protein] + ATP = O-phospho-L-tyrosyl-[protein] + ADP + H(+). Its function is as follows. Transmembrane tyrosine-protein kinase that may modulate TEK/TIE2 activity and contribute to the regulation of angiogenesis. In Homo sapiens (Human), this protein is Tyrosine-protein kinase receptor Tie-1 (TIE1).